We begin with the raw amino-acid sequence, 352 residues long: Fructose-1,6-bisphosphatase class 1 (352 aa).

Positions 111, 133, 135, and 136 each coordinate Mg(2+). Residues 136 to 139 (DGSS), asparagine 228, tyrosine 256, and lysine 286 each bind substrate. Glutamate 292 is a Mg(2+) binding site.

This sequence belongs to the FBPase class 1 family. As to quaternary structure, homotetramer. Mg(2+) serves as cofactor.

It localises to the cytoplasm. The catalysed reaction is beta-D-fructose 1,6-bisphosphate + H2O = beta-D-fructose 6-phosphate + phosphate. It participates in carbohydrate biosynthesis; Calvin cycle. The polypeptide is Fructose-1,6-bisphosphatase class 1 (Crocosphaera subtropica (strain ATCC 51142 / BH68) (Cyanothece sp. (strain ATCC 51142))).